The following is a 796-amino-acid chain: Histone-lysine N-methyltransferase PRDM9 (796 aa).

The tract at residues 1–23 is disordered; the sequence is MSRTMNTNKPEENSTEGDAGKLE. Positions 27 to 90 constitute a KRAB-related domain; it reads KVKDEFKDIS…QRQAIKPQIN (64 aa). Residues 149–172 are disordered; that stretch reads SEHAQKPVCSPEEGNTSGQHFGKK. 4 residues coordinate Zn(2+): Cys209, Cys212, Cys220, and His223. Residues 248–362 enclose the SET domain; the sequence is PGLRIGPSGI…PGRELLVWYG (115 aa). S-adenosyl-L-methionine is bound by residues 260 to 262, Tyr295, and 324 to 325; these read AGL and NC. A substrate-binding site is contributed by 292–298; that stretch reads NSGYSWL. Tyr361 serves as a coordination point for substrate. Lys372 carries the post-translational modification N6,N6,N6-trimethyllysine; alternate. Lys372 carries the post-translational modification N6-methyllysine; alternate. Lys376 and Lys378 each carry N6-methyllysine. The segment at 392 to 415 adopts a C2H2-type 1 zinc-finger fold; sequence HPCFLCSLAFSSQKFLTQHVEWNH. Cys394, Cys397, His410, and His415 together coordinate Zn(2+). Positions 443–457 are enriched in basic and acidic residues; sequence FDSQNKNDKASNEVK. A disordered region spans residues 443 to 497; it reads FDSQNKNDKASNEVKRKSKPRHKWTRQRISTAFSSTLKEQMRSEESKRTVEEELR. Over residues 458-468 the composition is skewed to basic residues; it reads RKSKPRHKWTR. Residues 469 to 480 show a composition bias toward polar residues; the sequence is QRISTAFSSTLK. A compositionally biased stretch (basic and acidic residues) spans 481-497; sequence EQMRSEESKRTVEEELR. The C2H2-type 2; degenerate zinc-finger motif lies at 522–540; it reads QCGQCFSDKSNVSEHQRTH. 9 C2H2-type zinc fingers span residues 546 to 568, 574 to 596, 602 to 624, 630 to 652, 658 to 680, 686 to 708, 714 to 736, 742 to 764, and 770 to 792; these read YICR…QRTH and YICR…LRTH. Zn(2+) contacts are provided by Cys716, Cys719, His732, His736, Cys744, Cys747, His760, His764, Cys772, Cys775, His788, and His792.

It belongs to the class V-like SAM-binding methyltransferase superfamily. Homodimer. Interacts with EHMT2 and CDYL; interaction only takes place when PRDM9 is bound to hotspot DNA. Interacts with CXXC1; this interaction does not link PRDM9-activated recombination hotspot sites with DSB machinery and is not required for the hotspot recognition pathway. Forms a complex with EWSR1, REC8, SYCP3 and SYCP1; complex formation is dependent of phosphorylated form of REC8 and requires PRDM9 bound to hotspot DNA; EWSR1 joins PRDM9 with the chromosomal axis through REC8. Mono-methylated; automethylated. Tri-methylated; automethylated. Mono-methylation is predominant; automethylation is lower and slower than H3 peptide methylation and is in a highest S-adenosyl-L-methionine concentration-dependent. There are two major sites for automethylation at Lys-372 and Lys-378. Lysines can be simultaneously methylated, such as Lys-372(me3)/Lys-376(me1), Lys-372(me1)/Lys-378(me1) and Lys-372(me1)/Lys-376(me1)/Lys-378(me1). Automethylation is an intramolecular (cis) process.

The protein resides in the nucleus. The protein localises to the chromosome. The catalysed reaction is L-lysyl-[protein] + S-adenosyl-L-methionine = N(6)-methyl-L-lysyl-[protein] + S-adenosyl-L-homocysteine + H(+). It catalyses the reaction N(6)-methyl-L-lysyl-[protein] + S-adenosyl-L-methionine = N(6),N(6)-dimethyl-L-lysyl-[protein] + S-adenosyl-L-homocysteine + H(+). The enzyme catalyses L-lysyl(4)-[histone H3] + 3 S-adenosyl-L-methionine = N(6),N(6),N(6)-trimethyl-L-lysyl(4)-[histone H3] + 3 S-adenosyl-L-homocysteine + 3 H(+). It carries out the reaction L-lysyl(36)-[histone H3] + 3 S-adenosyl-L-methionine = N(6),N(6),N(6)-trimethyl-L-lysyl(36)-[histone H3] + 3 S-adenosyl-L-homocysteine + 3 H(+). The catalysed reaction is L-lysyl(9)-[histone H3] + 3 S-adenosyl-L-methionine = N(6),N(6),N(6)-trimethyl-L-lysyl(9)-[histone H3] + 3 S-adenosyl-L-homocysteine + 3 H(+). It catalyses the reaction L-lysyl(20)-[histone H4] + S-adenosyl-L-methionine = N(6)-methyl-L-lysyl(20)-[histone H4] + S-adenosyl-L-homocysteine + H(+). The enzyme catalyses N(6)-methyl-L-lysyl(20)-[histone H4] + S-adenosyl-L-methionine = N(6),N(6)-dimethyl-L-lysyl(20)-[histone H4] + S-adenosyl-L-homocysteine + H(+). In terms of biological role, histone methyltransferase that sequentially mono-, di-, and tri-methylates both 'Lys-4' (H3K4) and 'Lys-36' (H3K36) of histone H3 to produce respectively trimethylated 'Lys-4' (H3K4me3) and trimethylated 'Lys-36' (H3K36me3) histone H3 and plays a key role in meiotic prophase by determining hotspot localization thereby promoting meiotic recombination. Can also methylate all four core histones with H3 being the best substrate and the most highly modified. Is also able, on one hand, to mono and di-methylate H4K20 and on other hand to trimethylate H3K9 with the di-methylated H3K9 as the best substrate. During meiotic prophase, binds specific DNA sequences through its zinc finger domains thereby determining hotspot localization where it promotes local H3K4me3 and H3K36me3 enrichment on the same nucleosomes through its histone methyltransferase activity. Thereby promotes double-stranded breaks (DSB) formation, at this subset of PRDM9-binding sites, that initiates meiotic recombination for the proper meiotic progression. During meiotic progression hotspot-bound PRDM9 interacts with several complexes; in early leptonema binds CDYL and EHMT2 followed by EWSR1 and CXXC1 by the end of leptonema. EWSR1 joins PRDM9 with the chromosomal axis through REC8. In this way, controls the DSB repair pathway, pairing of homologous chromosomes and sex body formation. Moreover plays a central role in the transcriptional activation of genes during early meiotic prophase thanks to H3K4me3 and H3K36me3 enrichment that represents a specific tag for epigenetic transcriptional activation. In addition performs automethylation. Acetylation and phosphorylation of histone H3 attenuate or prevent histone H3 methylation. The protein is Histone-lysine N-methyltransferase PRDM9 of Rattus norvegicus (Rat).